We begin with the raw amino-acid sequence, 368 residues long: Zinc finger protein 24 (368 aa).

Residue Lys22 forms a Glycyl lysine isopeptide (Lys-Gly) (interchain with G-Cter in SUMO2) linkage. Residue Lys27 forms a Glycyl lysine isopeptide (Lys-Gly) (interchain with G-Cter in SUMO1); alternate linkage. Residue Lys27 forms a Glycyl lysine isopeptide (Lys-Gly) (interchain with G-Cter in SUMO2); alternate linkage. One can recognise an SCAN box domain in the interval 52–134 (RQRFRQFGYQ…TVLEDLESEL (83 aa)). Phosphoserine occurs at positions 132 and 142. Glycyl lysine isopeptide (Lys-Gly) (interchain with G-Cter in SUMO2) cross-links involve residues Lys147, Lys177, and Lys236. The segment at 251-273 (HICDECGKHFSQGSALILHQRIH) adopts a C2H2-type 1 zinc-finger fold. Residues 251–301 (HICDECGKHFSQGSALILHQRIHSGEKPYGCVECGKAFSRSSILVQHQRVH) form a necessary and sufficient for nuclear localization region. Ser274 carries the post-translational modification Phosphoserine. Glycyl lysine isopeptide (Lys-Gly) (interchain with G-Cter in SUMO2) cross-links involve residues Lys277 and Lys286. C2H2-type zinc fingers lie at residues 279–301 (YGCV…QRVH), 307–329 (YKCL…QRIH), and 335–357 (YECV…XXRH). The residue at position 292 (Ser292) is a Phosphoserine. At Tyr335 the chain carries Phosphotyrosine. Residues Lys361 and Lys367 each participate in a glycyl lysine isopeptide (Lys-Gly) (interchain with G-Cter in SUMO2) cross-link.

The protein belongs to the krueppel C2H2-type zinc-finger protein family. Sumoylated.

The protein resides in the nucleus. Its function is as follows. Transcription factor required for myelination of differentiated oligodendrocytes. Required for the conversion of oligodendrocytes from the premyelinating to the myelinating state. In the developing central nervous system (CNS), involved in the maintenance in the progenitor stage by promoting the cell cycle. Specifically binds to the 5'-TCAT-3' DNA sequence. Has transcription repressor activity in vitro. This chain is Zinc finger protein 24 (ZNF24), found in Pan troglodytes (Chimpanzee).